The following is a 475-amino-acid chain: MNHLVIISVFLSSVLLLYRGESGITSSFIRSEWPAVDIPLDHHVFKVPKGYNAPQQVHITQGDYDGKAVIISWVTPDEPGSSQVHYGAVQGKYEFVAQGTYHNYTFYKYKSGFIHHCLVSDLEHDTKYYYKIESGESSREFWFVTPPHVHPDASYKFGIIGDMGQTFNSLSTLEHYMESGAQAVLFLGDLSYADRYQYNDVGVRWDSWGRFVERSTAYQPWLWSAGNHEVDYMPYMGEVTPFRNYLQRYTTPYLASKSSSPLWYAVRRASAHIIVLSSYSPFVKYTPQWHWLSEELTRVDREKTPWLIVLMHVPIYNSNEAHFMEGESMRAAFEEWFVQHKVDVIFAGHVHAYERSYRISNVRYNVSSGDRYPVPDKSAPVYITVGDGGNQEGLAGRFTEPQPDYSAFREASYGHSTLDIKNRTHAIYHWNRNDDGKKVATDEFVLHNQYWGKNIRRRKLKKHYIRSVVGGWIAT.

An N-terminal signal peptide occupies residues 1-30 (MNHLVIISVFLSSVLLLYRGESGITSSFIR). N-linked (GlcNAc...) asparagine glycosylation is present at asparagine 103. Fe cation is bound by residues aspartate 162, aspartate 189, and tyrosine 192. A Zn(2+)-binding site is contributed by aspartate 189. Residues asparagine 227 and histidine 312 each coordinate Zn(2+). Asparagine 227 is a binding site for substrate. Residue histidine 322 is the Proton donor of the active site. Residue histidine 349 coordinates Zn(2+). 349–351 (HVH) contributes to the substrate binding site. Histidine 351 serves as a coordination point for Fe cation. 2 N-linked (GlcNAc...) asparagine glycosylation sites follow: asparagine 365 and asparagine 422.

It belongs to the metallophosphoesterase superfamily. Purple acid phosphatase family. Homodimer. The cofactor is Fe cation. Requires Zn(2+) as cofactor. Post-translationally, glycosylated. As to expression, expressed in roots, stems, leaves, flowers and siliques.

Its subcellular location is the vacuole. It catalyses the reaction a phosphate monoester + H2O = an alcohol + phosphate. The enzyme catalyses 2 a phenolic donor + H2O2 = 2 a phenolic radical donor + 2 H2O. Activated by Mg(2+), Co(2+), Mn(2+) and Ba(2+). Inhibited by Fe(2+), Cu(2+), Zn(2+), NaF, molybdate, arsenate, vanadate and inorganic phosphate. No effect of tartrate, Asp, Gln, glutathione, Asn, ascorbic acid and phosphite. Metallo-phosphoesterase involved in phosphate metabolism. Acid phosphatase activity with phosphoenolpyruvate, inorganic pyrophosphate, phenyl-phosphate and p-nitrophenyl-phosphate as the most effective substrates. No activity with phytic acid, phosphocholine or bis-p-nitrophenyl-phosphate. Has a peroxidase activity at alkaline pH. This chain is Bifunctional purple acid phosphatase 26 (PAP26), found in Arabidopsis thaliana (Mouse-ear cress).